A 725-amino-acid polypeptide reads, in one-letter code: Ophiobolin F synthase (725 aa).

Residues 1–322 (MEYKYSTIVD…RYHADAKFNE (322 aa)) are (7Z)-ophiobola-7,19-dien-3-ol synthase. Residues Asp-93 and Asp-97 each contribute to the Mg(2+) site. Asp-93 is a binding site for substrate. The DDXXD 1 motif lies at 93-97 (DDEID). Substrate-binding positions include 182-185 (RCMD), Asn-226, 230-234 (SYEKE), and 313-314 (RY). An NSE/DTE motif is present at residues 226 to 234 (NDLFSYEKE). The segment at 323 to 725 (LQMLRAEHGV…LRMMLELLKV (403 aa)) is geranylfarnesyl diphosphate synthase. A disordered region spans residues 362–388 (GVNGVNGKRKRSGEETADDARTNGNGI). Over residues 373 to 382 (SGEETADDAR) the composition is skewed to basic and acidic residues. Isopentenyl diphosphate is bound by residues Lys-436, Arg-439, and His-468. The Mg(2+) site is built by Asp-475 and Asp-479. Residues 475–479 (DDIED) carry the DDXXD 2 motif. Position 484 (Arg-484) interacts with dimethylallyl diphosphate. Arg-485 contacts isopentenyl diphosphate. Positions 562, 563, 601, 608, 618, and 628 each coordinate dimethylallyl diphosphate.

This sequence in the N-terminal section; belongs to the terpene synthase family. It in the C-terminal section; belongs to the FPP/GGPP synthase family. The cofactor is Mg(2+).

It carries out the reaction isopentenyl diphosphate + (2E,6E)-farnesyl diphosphate = (2E,6E,10E)-geranylgeranyl diphosphate + diphosphate. The catalysed reaction is isopentenyl diphosphate + (2E,6E,10E)-geranylgeranyl diphosphate = (2E,6E,10E,14E)-geranylfarnesyl diphosphate + diphosphate. It catalyses the reaction (2E,6E,10E,14E)-geranylfarnesyl diphosphate + H2O = ophiobolin F + diphosphate. It participates in secondary metabolite biosynthesis; terpenoid biosynthesis. In terms of biological role, bifunctional sesterterpene synthase that converts isopentenyl diphosphate (IPP) and dimethylallyl diphosphate (DMAPP) into ophiobolin F. The C-terminal prenyltransferase (PT) domain of AcldOS converts isopentenyl diphosphate and dimethylallyl diphosphate into geranylfarnesyl diphosphate (GFPP), whereas the N-terminal terpene cyclase (TC) domain catalyzes the cyclization of GFPP to ophiobolin F. The chain is Ophiobolin F synthase from Aspergillus calidoustus.